A 289-amino-acid chain; its full sequence is Zinc finger matrin-type protein 3 (289 aa).

A disordered region spans residues 1 to 42 (MILLQHAVLPPPKQPSPSPPMSVATRSTGTLQLPPQKPFGQE). Residues 9–20 (LPPPKQPSPSPP) are compositionally biased toward pro residues. Polar residues predominate over residues 24-33 (ATRSTGTLQL). 2 consecutive Matrin-type zinc fingers follow at residues 70-100 (LYCK…KLRN) and 147-177 (DYCK…RLRL). Residues 180–191 (AQSNSFSESSEL) show a composition bias toward polar residues. Positions 180 to 201 (AQSNSFSESSELGQRRARKEGN) are disordered. Residues 246-276 (FYCSMCNVGAGEEMEFRQHLESKQHKSKVSE) form a Matrin-type 3 zinc finger.

As to quaternary structure, interacts with dsRNA. In terms of tissue distribution, highly expressed in adult brain, and moderately in adult kidney and testis. Not detected in fetal brain, heart, pancreas, adrenal gland, liver or small intestine.

It is found in the nucleus. Its subcellular location is the nucleolus. Functionally, acts as a bona fide target gene of p53/TP53. May play a role in the TP53-dependent growth regulatory pathway. May contribute to TP53-mediated apoptosis by regulation of TP53 expression and translocation to the nucleus and nucleolus. The polypeptide is Zinc finger matrin-type protein 3 (Homo sapiens (Human)).